Reading from the N-terminus, the 366-residue chain is Cobalt-precorrin-5B C(1)-methyltransferase (366 aa).

This sequence belongs to the CbiD family.

The catalysed reaction is Co-precorrin-5B + S-adenosyl-L-methionine = Co-precorrin-6A + S-adenosyl-L-homocysteine. The protein operates within cofactor biosynthesis; adenosylcobalamin biosynthesis; cob(II)yrinate a,c-diamide from sirohydrochlorin (anaerobic route): step 6/10. Functionally, catalyzes the methylation of C-1 in cobalt-precorrin-5B to form cobalt-precorrin-6A. The polypeptide is Cobalt-precorrin-5B C(1)-methyltransferase (Pseudomonas aeruginosa (strain LESB58)).